Here is a 408-residue protein sequence, read N- to C-terminus: NADH-quinone oxidoreductase subunit D (408 aa).

This sequence belongs to the complex I 49 kDa subunit family. In terms of assembly, NDH-1 is composed of 14 different subunits. Subunits NuoB, C, D, E, F, and G constitute the peripheral sector of the complex.

It localises to the cell inner membrane. It carries out the reaction a quinone + NADH + 5 H(+)(in) = a quinol + NAD(+) + 4 H(+)(out). Functionally, NDH-1 shuttles electrons from NADH, via FMN and iron-sulfur (Fe-S) centers, to quinones in the respiratory chain. The immediate electron acceptor for the enzyme in this species is believed to be ubiquinone. Couples the redox reaction to proton translocation (for every two electrons transferred, four hydrogen ions are translocated across the cytoplasmic membrane), and thus conserves the redox energy in a proton gradient. This Campylobacter jejuni subsp. doylei (strain ATCC BAA-1458 / RM4099 / 269.97) protein is NADH-quinone oxidoreductase subunit D.